The primary structure comprises 391 residues: Phosphoprotein (391 aa).

Phosphothreonine is present on residues Thr10 and Thr16. Positions 54–65 (QKNIQHPTASHQ) are enriched in polar residues. Disordered regions lie at residues 54-98 (QKNI…EPLF) and 148-184 (PVTEFKRGGPGAAAQGQTIQEEGIDGNGASAGSKERS). Ser69 is subject to Phosphoserine. Phosphothreonine is present on residues Thr91, Thr150, and Thr165. The residue at position 188 (Ser188) is a Phosphoserine. The multimerization stretch occupies residues 216-279 (ISANEIMDLL…MATVKIMDPG (64 aa)). The stretch at 218 to 245 (ANEIMDLLRGMDARLQHLEQKVDKVLAQ) forms a coiled coil. Residue Thr250 is modified to Phosphothreonine. Phosphoserine is present on Ser257. Thr258 and Thr282 each carry phosphothreonine. 2 positions are modified to phosphoserine: Ser292 and Ser294. At Thr298 the chain carries Phosphothreonine. A phosphoserine mark is found at Ser301 and Ser374. The tract at residues 343 to 391 (AGRKVMITKMITDCVANPQMKQAFEQRLAKASTEDALNDIKRDIIRSAI) is interaction with the nucleoprotein. Phosphothreonine is present on Thr375.

It belongs to the rubulavirus/avulavirus P protein family. In terms of assembly, homotetramer. Interacts (via multimerization domain) with polymerase L; this interaction forms the polymerase L-P complex. Interacts (via N-terminus) with N0 (via Ncore); this interaction allows P to chaperon N0 to avoid N polymerization before encapsidation. Interacts (via C-terminus) with N-RNA template; this interaction positions the polymerase on the template for both transcription and replication. Interacts with host RPS6KB1 kinase; this interaction may play a role in the viral replication and transcription.

Essential cofactor of the RNA polymerase L that plays a central role in the transcription and replication by forming the polymerase complex with RNA polymerase L and recruiting L to the genomic N-RNA template for RNA synthesis. Also plays a central role in the encapsidation of nascent RNA chains by forming the encapsidation complex with the nucleocapsid protein N (N-P complex). Acts as a chaperone for newly synthesized free N protein, so-called N0, allowing encapsidation of nascent RNA chains during replication. The nucleoprotein protein N prevents excessive phosphorylation of P, which leads to down-regulation of viral transcription/ replication. Participates, together with N, in the formation of viral factories (viroplasms), which are large inclusions in the host cytoplasm where replication takes place. This Mumps virus (strain Enders) (MuV) protein is Phosphoprotein.